The primary structure comprises 221 residues: Proline-rich protein 20A (221 aa).

2 disordered regions span residues 1 to 103 and 137 to 174; these read MEEP…QRQG and SLSE…GPQA. A compositionally biased stretch (low complexity) spans 42 to 53; it reads PAQPAQPAKPIA. Positions 63–72 are enriched in pro residues; the sequence is PARPESPPPA. The span at 75–93 shows a compositional bias: basic residues; that stretch reads GRRRGGSRRPGRGRGRRAG.

This sequence belongs to the PRR20 family.

This chain is Proline-rich protein 20A (PRR20A), found in Homo sapiens (Human).